The chain runs to 62 residues: Photosystem II reaction center protein Z (62 aa).

2 consecutive transmembrane segments (helical) span residues 8-28 (AVFALIATSSILLIGVPVVFA) and 41-61 (FSGTSLWIGLVFLVGILNSLI).

The protein belongs to the PsbZ family. In terms of assembly, PSII is composed of 1 copy each of membrane proteins PsbA, PsbB, PsbC, PsbD, PsbE, PsbF, PsbH, PsbI, PsbJ, PsbK, PsbL, PsbM, PsbT, PsbY, PsbZ, Psb30/Ycf12, at least 3 peripheral proteins of the oxygen-evolving complex and a large number of cofactors. It forms dimeric complexes.

It is found in the plastid. The protein resides in the chloroplast thylakoid membrane. May control the interaction of photosystem II (PSII) cores with the light-harvesting antenna, regulates electron flow through the 2 photosystem reaction centers. PSII is a light-driven water plastoquinone oxidoreductase, using light energy to abstract electrons from H(2)O, generating a proton gradient subsequently used for ATP formation. This is Photosystem II reaction center protein Z from Daucus carota (Wild carrot).